The sequence spans 158 residues: SH3 domain-binding glutamic acid-rich protein homolog (158 aa).

The segment covering 40-51 has biased composition (basic and acidic residues); that stretch reads TEPGKESEKELM. Residues 40–74 are disordered; it reads TEPGKESEKELMQNKSTSNGGTVSDPEPRHPLPPQ. The segment covering 52 to 61 has biased composition (polar residues); sequence QNKSTSNGGT. The short motif at 67–73 is the SH3-binding element; it reads PRHPLPP. At Thr109 the chain carries Phosphothreonine. Residues 118 to 158 form a disordered region; that stretch reads LKQENGDAKKEEAETEAEDKKTEAGDGDVDVKEEAAEKAEV.

This sequence belongs to the SH3BGR family.

This is SH3 domain-binding glutamic acid-rich protein homolog (Sh3beta) from Drosophila melanogaster (Fruit fly).